Here is a 521-residue protein sequence, read N- to C-terminus: Phosphoethanolamine transferase EptA (521 aa).

6 consecutive transmembrane segments (helical) span residues 18–38, 47–67, 79–99, 118–138, 150–170, and 182–202; these read AGLL…FVYV, FIAM…LALG, IVFS…KVFL, FLSV…GYVI, APFL…LANT, and FIGG…VSAL.

Belongs to the phosphoethanolamine transferase family. EptA subfamily.

The protein localises to the cell inner membrane. The protein operates within bacterial outer membrane biogenesis; LPS lipid A biosynthesis. Functionally, probably catalyzes the addition of a phosphoethanolamine moiety to the dephosphorylated 1-position of the disaccharide backbone of lipid A. Lipid A that is 1-phosphorylated is not a substrate for this enzyme. In Helicobacter pylori (strain ATCC 700392 / 26695) (Campylobacter pylori), this protein is Phosphoethanolamine transferase EptA.